A 432-amino-acid chain; its full sequence is Trigger factor (432 aa).

The 86-residue stretch at 161–246 folds into the PPIase FKBP-type domain; that stretch reads EDRVTIDFTG…LKKVEERELP (86 aa).

It belongs to the FKBP-type PPIase family. Tig subfamily.

Its subcellular location is the cytoplasm. It carries out the reaction [protein]-peptidylproline (omega=180) = [protein]-peptidylproline (omega=0). Its function is as follows. Involved in protein export. Acts as a chaperone by maintaining the newly synthesized protein in an open conformation. Functions as a peptidyl-prolyl cis-trans isomerase. In Salmonella typhi, this protein is Trigger factor.